Here is an 87-residue protein sequence, read N- to C-terminus: Large ribosomal subunit protein bL31B (87 aa).

The protein belongs to the bacterial ribosomal protein bL31 family. Type B subfamily. Part of the 50S ribosomal subunit.

This is Large ribosomal subunit protein bL31B from Corynebacterium kroppenstedtii (strain DSM 44385 / JCM 11950 / CIP 105744 / CCUG 35717).